The following is a 204-amino-acid chain: VQ motif-containing protein 13 (204 aa).

Over residues 1-12 the composition is skewed to basic and acidic residues; sequence MEKSPRYRDKAK. Residues 1–26 are disordered; sequence MEKSPRYRDKAKNLLPSPSSCTTTPT. Residues 16–26 show a composition bias toward low complexity; that stretch reads PSPSSCTTTPT. Residue Ser-17 is modified to Phosphoserine. The VQ motif lies at 46-55; that stretch reads FKQVVQLLTG. Residues 56–90 are disordered; the sequence is IPKNPTHQPDPRFPPFHSIPPIKAVTNKKQSSSFR. Phosphoserine occurs at positions 73 and 128. Thr-131 carries the post-translational modification Phosphothreonine. Positions 133–204 are disordered; that stretch reads LMSDPFYRPG…HSPAPSPHDH (72 aa). Positions 143 to 152 are enriched in low complexity; it reads SFSQSPSDSK. Residues Ser-147 and Ser-173 each carry the phosphoserine modification. Phosphothreonine is present on residues Thr-177 and Thr-192. 2 positions are modified to phosphoserine: Ser-196 and Ser-200.

Post-translationally, phosphorylated on serine and threonine residues by MPK6.

The protein resides in the nucleus. May modulate WRKY transcription factor activities. The chain is VQ motif-containing protein 13 from Arabidopsis thaliana (Mouse-ear cress).